The following is a 251-amino-acid chain: NADH-quinone oxidoreductase subunit C (251 aa).

The interval 1 to 34 (MSDANNTAGDANEVNPEKDLSAENLPGQRGQGGE) is disordered.

Belongs to the complex I 30 kDa subunit family. As to quaternary structure, NDH-1 is composed of 14 different subunits. Subunits NuoB, C, D, E, F, and G constitute the peripheral sector of the complex.

The protein resides in the cell membrane. The catalysed reaction is a quinone + NADH + 5 H(+)(in) = a quinol + NAD(+) + 4 H(+)(out). In terms of biological role, NDH-1 shuttles electrons from NADH, via FMN and iron-sulfur (Fe-S) centers, to quinones in the respiratory chain. The immediate electron acceptor for the enzyme in this species is believed to be a menaquinone. Couples the redox reaction to proton translocation (for every two electrons transferred, four hydrogen ions are translocated across the cytoplasmic membrane), and thus conserves the redox energy in a proton gradient. This Streptomyces coelicolor (strain ATCC BAA-471 / A3(2) / M145) protein is NADH-quinone oxidoreductase subunit C.